The primary structure comprises 463 residues: Glutamate--tRNA ligase 2 (463 aa).

The short motif at 10-20 is the 'HIGH' region element; that stretch reads PSPTGFLHIGS. The 'KMSKS' region motif lies at 239 to 243; sequence KLSKR. K242 contacts ATP.

It belongs to the class-I aminoacyl-tRNA synthetase family. Glutamate--tRNA ligase type 1 subfamily. Monomer.

It is found in the cytoplasm. The catalysed reaction is tRNA(Glu) + L-glutamate + ATP = L-glutamyl-tRNA(Glu) + AMP + diphosphate. Its function is as follows. Catalyzes the attachment of glutamate to tRNA(Glu) in a two-step reaction: glutamate is first activated by ATP to form Glu-AMP and then transferred to the acceptor end of tRNA(Glu). The polypeptide is Glutamate--tRNA ligase 2 (Rickettsia akari (strain Hartford)).